Reading from the N-terminus, the 168-residue chain is MSDYVVIGKITKTHGLFGSVKVLPLTNALEVFQKLENVFIKNDAQSNTHRLQIEEIRKAGKGFLIKFSGIDDEERARKIVGLSLAVRVTDLPKPKSPNEYYYYELLNVEVLDQSGNFIGRVEDIIQTGSNEVAVVKNGSFEMLIPVIHDYIIKFEKRKRLVVKVPEWI.

The PRC barrel domain maps to 97-168 (PNEYYYYELL…RLVVKVPEWI (72 aa)).

The protein belongs to the RimM family. In terms of assembly, binds ribosomal protein uS19.

It is found in the cytoplasm. An accessory protein needed during the final step in the assembly of 30S ribosomal subunit, possibly for assembly of the head region. Essential for efficient processing of 16S rRNA. May be needed both before and after RbfA during the maturation of 16S rRNA. It has affinity for free ribosomal 30S subunits but not for 70S ribosomes. The protein is Ribosome maturation factor RimM of Pseudothermotoga lettingae (strain ATCC BAA-301 / DSM 14385 / NBRC 107922 / TMO) (Thermotoga lettingae).